Reading from the N-terminus, the 110-residue chain is Large ribosomal subunit protein uL22 (110 aa).

Belongs to the universal ribosomal protein uL22 family. In terms of assembly, part of the 50S ribosomal subunit.

Its function is as follows. This protein binds specifically to 23S rRNA; its binding is stimulated by other ribosomal proteins, e.g. L4, L17, and L20. It is important during the early stages of 50S assembly. It makes multiple contacts with different domains of the 23S rRNA in the assembled 50S subunit and ribosome. In terms of biological role, the globular domain of the protein is located near the polypeptide exit tunnel on the outside of the subunit, while an extended beta-hairpin is found that lines the wall of the exit tunnel in the center of the 70S ribosome. The protein is Large ribosomal subunit protein uL22 of Aggregatibacter actinomycetemcomitans (Actinobacillus actinomycetemcomitans).